The primary structure comprises 258 residues: Phosphoprotein ECPP44 (258 aa).

Disordered stretches follow at residues 1–25 (MASD…DRGL), 46–131 (EKVQ…PVEV), and 148–175 (KLPG…VDCA). Composition is skewed to basic and acidic residues over residues 11–25 (SVEK…DRGL), 46–80 (EKVQ…EKLH), 109–124 (GLKE…KEED), and 148–158 (KLPGGGKKVEE).

The protein belongs to the plant dehydrin family. Phosphorylated in embryogenic and somatic embryos. Not phosphorylated in non-embryogenic cells.

In terms of biological role, phosphorylation of ECCP44 protein is thought to be involved in the acquisition of embryogenic competence. Unlike other dehydrins, it is not thought to function as an environmental stress tolerant. In Daucus carota (Wild carrot), this protein is Phosphoprotein ECPP44 (ECPP44).